A 208-amino-acid chain; its full sequence is Small ribosomal subunit protein uS4 (208 aa).

Positions 95–159 (TIIDNIVYRA…LKKLIGSNIE (65 aa)) constitute an S4 RNA-binding domain.

The protein belongs to the universal ribosomal protein uS4 family. In terms of assembly, part of the 30S ribosomal subunit. Contacts protein S5. The interaction surface between S4 and S5 is involved in control of translational fidelity.

In terms of biological role, one of the primary rRNA binding proteins, it binds directly to 16S rRNA where it nucleates assembly of the body of the 30S subunit. Its function is as follows. With S5 and S12 plays an important role in translational accuracy. The protein is Small ribosomal subunit protein uS4 of Borreliella afzelii (strain PKo) (Borrelia afzelii).